Here is a 464-residue protein sequence, read N- to C-terminus: Trigger factor (464 aa).

In terms of domain architecture, PPIase FKBP-type spans 162-243; sequence GDFISIDLSA…VGTVKERELP (82 aa). A disordered region spans residues 435–464; that stretch reads ELFGNGEAETEEAASTDEAASDSTESEDQK.

Belongs to the FKBP-type PPIase family. Tig subfamily.

The protein resides in the cytoplasm. It carries out the reaction [protein]-peptidylproline (omega=180) = [protein]-peptidylproline (omega=0). Its function is as follows. Involved in protein export. Acts as a chaperone by maintaining the newly synthesized protein in an open conformation. Functions as a peptidyl-prolyl cis-trans isomerase. The protein is Trigger factor of Rhodococcus jostii (strain RHA1).